We begin with the raw amino-acid sequence, 310 residues long: Putative methyltransferase mtx subunit H (310 aa).

The protein belongs to the MtrH family. As to quaternary structure, may be part of a complex composed of 3 subunits; MtxA, MtxH and MtxX.

In Methanosarcina acetivorans (strain ATCC 35395 / DSM 2834 / JCM 12185 / C2A), this protein is Putative methyltransferase mtx subunit H (mtxH).